A 105-amino-acid chain; its full sequence is UPF0145 protein lpl0253 (105 aa).

This sequence belongs to the UPF0145 family.

This is UPF0145 protein lpl0253 from Legionella pneumophila (strain Lens).